Reading from the N-terminus, the 424-residue chain is E3 ubiquitin-protein ligase RNF26 (424 aa).

A run of 5 helical transmembrane segments spans residues Leu24–Tyr44, Gly60–Leu80, Ile157–Leu177, Val183–Trp203, and Val224–Val244. The RING-type zinc-finger motif lies at Cys371 to Arg413.

In terms of assembly, interacts with INCA1. Interacts with TMEM43, ENDOD1, TMEM33 and TMED1 to form a complex capable of modulating innate immune signaling through the cGAS-STING pathway. Interacts with UBE2J1; this interaction is important for SQSTM1 ubiquitination.

The protein resides in the endoplasmic reticulum membrane. It catalyses the reaction S-ubiquitinyl-[E2 ubiquitin-conjugating enzyme]-L-cysteine + [acceptor protein]-L-lysine = [E2 ubiquitin-conjugating enzyme]-L-cysteine + N(6)-ubiquitinyl-[acceptor protein]-L-lysine.. The protein operates within protein modification; protein ubiquitination. In terms of biological role, E3 ubiquitin-protein ligase that plays a key role in endosome organization by retaining vesicles in the perinuclear cloud. Acts as a platform for perinuclear positioning of the endosomal system by mediating ubiquitination of SQSTM1 through interaction with the ubiquitin conjugating enzyme UBE2J1. Ubiquitinated SQSTM1 attracts specific vesicle-associated adapters, forming a molecular bridge that restrains cognate vesicles in the perinuclear region and organizes the endosomal pathway for efficient cargo transport. Also acts as a regulator of type I interferon production in response to viral infection by mediating the formation of 'Lys-11'-linked polyubiquitin chains on TMEM173/STING, leading to stabilize TMEM173/STING. Also required to limit type I interferon response by promoting autophagic degradation of IRF3. The chain is E3 ubiquitin-protein ligase RNF26 from Mus musculus (Mouse).